Here is a 138-residue protein sequence, read N- to C-terminus: Secreted RxLR effector protein 91 (138 aa).

Positions 1–18 (MVIPHIICLPMALHLWTC) are cleaved as a signal peptide. The short motif at 34-37 (RRLR) is the RxLR element. Residue asparagine 93 is glycosylated (N-linked (GlcNAc...) asparagine).

It belongs to the RxLR effector family.

It is found in the secreted. It localises to the host nucleus. Its function is as follows. Secreted effector that completely suppresses the host cell death induced by cell death-inducing proteins. The protein is Secreted RxLR effector protein 91 of Plasmopara viticola (Downy mildew of grapevine).